We begin with the raw amino-acid sequence, 96 residues long: Co-chaperonin GroES (96 aa).

This sequence belongs to the GroES chaperonin family. Heptamer of 7 subunits arranged in a ring. Interacts with the chaperonin GroEL.

It localises to the cytoplasm. Together with the chaperonin GroEL, plays an essential role in assisting protein folding. The GroEL-GroES system forms a nano-cage that allows encapsulation of the non-native substrate proteins and provides a physical environment optimized to promote and accelerate protein folding. GroES binds to the apical surface of the GroEL ring, thereby capping the opening of the GroEL channel. This is Co-chaperonin GroES from Leptospira interrogans serogroup Icterohaemorrhagiae serovar copenhageni (strain Fiocruz L1-130).